A 380-amino-acid polypeptide reads, in one-letter code: Cell division protein ZipA (380 aa).

At 1-7 (MEDNFRN) the chain is on the periplasmic side. The chain crosses the membrane as a helical span at residues 8–28 (VLIILSAIVITAIFIHGLWTL). At 29–380 (RKQKNPYKLK…DRKSRIALVE (352 aa)) the chain is on the cytoplasmic side.

This sequence belongs to the ZipA family. In terms of assembly, interacts with FtsZ via their C-terminal domains.

The protein resides in the cell inner membrane. Functionally, essential cell division protein that stabilizes the FtsZ protofilaments by cross-linking them and that serves as a cytoplasmic membrane anchor for the Z ring. Also required for the recruitment to the septal ring of downstream cell division proteins. In Colwellia psychrerythraea (strain 34H / ATCC BAA-681) (Vibrio psychroerythus), this protein is Cell division protein ZipA.